The primary structure comprises 210 residues: Protein-L-isoaspartate O-methyltransferase (210 aa).

Ser54 is an active-site residue.

This sequence belongs to the methyltransferase superfamily. L-isoaspartyl/D-aspartyl protein methyltransferase family.

It localises to the cytoplasm. It catalyses the reaction [protein]-L-isoaspartate + S-adenosyl-L-methionine = [protein]-L-isoaspartate alpha-methyl ester + S-adenosyl-L-homocysteine. In terms of biological role, catalyzes the methyl esterification of L-isoaspartyl residues in peptides and proteins that result from spontaneous decomposition of normal L-aspartyl and L-asparaginyl residues. It plays a role in the repair and/or degradation of damaged proteins. This Methanothrix thermoacetophila (strain DSM 6194 / JCM 14653 / NBRC 101360 / PT) (Methanosaeta thermophila) protein is Protein-L-isoaspartate O-methyltransferase.